We begin with the raw amino-acid sequence, 974 residues long: Valine--tRNA ligase, chloroplastic/mitochondrial 2 (974 aa).

Residues 109 to 119 (PNVTGSLHMGH) carry the 'HIGH' region motif. One copy of the LRR 1 repeat lies at 432–454 (LAEKALLAVENKELTIIPERFEK). The stretch at 489–518 (EEDYIVAKSAEEALEKALEKYGKDVEIYQD) forms a coiled coil. The 'KMSKS' region motif lies at 598-602 (KMSKS). Lys-601 lines the ATP pocket. The LRR 2 repeat unit spans residues 857 to 880 (LALLSRLDLNNVHFSNAPPGDANL).

It belongs to the class-I aminoacyl-tRNA synthetase family.

It is found in the plastid. The protein resides in the chloroplast. It localises to the mitochondrion. It carries out the reaction tRNA(Val) + L-valine + ATP = L-valyl-tRNA(Val) + AMP + diphosphate. The chain is Valine--tRNA ligase, chloroplastic/mitochondrial 2 from Arabidopsis thaliana (Mouse-ear cress).